The primary structure comprises 354 residues: Methylthioribose-1-phosphate isomerase (354 aa).

Residues Arg-58–Ala-60, Arg-101, and Gln-204 contribute to the substrate site. Asp-245 serves as the catalytic Proton donor. Asn-255 to Lys-256 serves as a coordination point for substrate.

This sequence belongs to the eIF-2B alpha/beta/delta subunits family. MtnA subfamily.

The enzyme catalyses 5-(methylsulfanyl)-alpha-D-ribose 1-phosphate = 5-(methylsulfanyl)-D-ribulose 1-phosphate. It functions in the pathway amino-acid biosynthesis; L-methionine biosynthesis via salvage pathway; L-methionine from S-methyl-5-thio-alpha-D-ribose 1-phosphate: step 1/6. In terms of biological role, catalyzes the interconversion of methylthioribose-1-phosphate (MTR-1-P) into methylthioribulose-1-phosphate (MTRu-1-P). This is Methylthioribose-1-phosphate isomerase from Xanthomonas oryzae pv. oryzae (strain MAFF 311018).